A 93-amino-acid chain; its full sequence is Putative septation protein SpoVG (93 aa).

The protein belongs to the SpoVG family.

In terms of biological role, could be involved in septation. This is Putative septation protein SpoVG from Treponema denticola (strain ATCC 35405 / DSM 14222 / CIP 103919 / JCM 8153 / KCTC 15104).